A 344-amino-acid polypeptide reads, in one-letter code: N-acetyl-gamma-glutamyl-phosphate reductase (344 aa).

Cys149 is a catalytic residue.

Belongs to the NAGSA dehydrogenase family. Type 1 subfamily.

It localises to the cytoplasm. It catalyses the reaction N-acetyl-L-glutamate 5-semialdehyde + phosphate + NADP(+) = N-acetyl-L-glutamyl 5-phosphate + NADPH + H(+). Its pathway is amino-acid biosynthesis; L-arginine biosynthesis; N(2)-acetyl-L-ornithine from L-glutamate: step 3/4. Functionally, catalyzes the NADPH-dependent reduction of N-acetyl-5-glutamyl phosphate to yield N-acetyl-L-glutamate 5-semialdehyde. In Syntrophobacter fumaroxidans (strain DSM 10017 / MPOB), this protein is N-acetyl-gamma-glutamyl-phosphate reductase.